We begin with the raw amino-acid sequence, 747 residues long: Probable cyclic nucleotide-gated ion channel 6 (747 aa).

The Cytoplasmic segment spans residues 1–117; that stretch reads MFDTCGPKGV…DKFLLLCNKL (117 aa). The chain crosses the membrane as a helical span at residues 118-138; the sequence is FVASCILAVSVDPLFLYLPFI. Residues 139-150 are Extracellular-facing; the sequence is NDKAKCVGIDRK. A helical membrane pass occupies residues 151–171; it reads LAIIVTTIRTVIDSFYLFHMA. Residues 172–205 are Cytoplasmic-facing; it reads LRFRTAYVAPSSRVFGRGELVIDPAQIAKRYLQQ. Residues 206–226 form a helical membrane-spanning segment; the sequence is YFIIDLLSVLPVPQIIVWRFL. Residues 227–239 are Extracellular-facing; sequence YTSRGANVLATKQ. The helical transmembrane segment at 240-260 threads the bilayer; sequence ALRYIVLVQYIPRFLRMYPLS. The Cytoplasmic portion of the chain corresponds to 261 to 280; it reads SELKRTAGVFAETAWAGAAY. The chain crosses the membrane as a helical span at residues 281–301; the sequence is YLLLYMLASHIVGALWYLLAL. At 302–407 the chain is on the extracellular side; sequence ERNNDCWSKA…GQGLETSTYP (106 aa). Residues 408–428 traverse the membrane as a helical segment; the sequence is GEVIFSITLAIAGLLLFALLI. Over 429–747 the chain is Cytoplasmic; it reads GNMQTYLQSL…PEPDFSAEDH (319 aa). A nucleoside 3',5'-cyclic phosphate is bound by residues 514 to 638 and aspartate 585; that span reads LFEN…SRQV. A calmodulin-binding region spans residues 630–645; sequence FRRLHSRQVQHTFRFY. Positions 650-679 constitute an IQ domain; that stretch reads RTWAACFMQAAWRRYIKRKKLEQLRKEEEE.

This sequence belongs to the cyclic nucleotide-gated cation channel (TC 1.A.1.5) family. In terms of assembly, homotetramer or heterotetramer.

The protein localises to the cell membrane. In terms of biological role, probable cyclic nucleotide-gated ion channel. This is Probable cyclic nucleotide-gated ion channel 6 (CNGC6) from Arabidopsis thaliana (Mouse-ear cress).